The sequence spans 393 residues: Chorismate synthase (393 aa).

The NADP(+) site is built by arginine 40 and arginine 46. Residues 129–131 (RAS), 251–252 (QA), glycine 301, 316–320 (KPIST), and arginine 342 contribute to the FMN site.

It belongs to the chorismate synthase family. Homotetramer. It depends on FMNH2 as a cofactor.

It carries out the reaction 5-O-(1-carboxyvinyl)-3-phosphoshikimate = chorismate + phosphate. It participates in metabolic intermediate biosynthesis; chorismate biosynthesis; chorismate from D-erythrose 4-phosphate and phosphoenolpyruvate: step 7/7. Catalyzes the anti-1,4-elimination of the C-3 phosphate and the C-6 proR hydrogen from 5-enolpyruvylshikimate-3-phosphate (EPSP) to yield chorismate, which is the branch point compound that serves as the starting substrate for the three terminal pathways of aromatic amino acid biosynthesis. This reaction introduces a second double bond into the aromatic ring system. This is Chorismate synthase from Koribacter versatilis (strain Ellin345).